The primary structure comprises 77 residues: Acyl carrier protein (77 aa).

The region spanning 2–77 is the Carrier domain; that stretch reads SNIEERVKKI…AAIDYVNSAQ (76 aa). At Ser-37 the chain carries O-(pantetheine 4'-phosphoryl)serine.

Belongs to the acyl carrier protein (ACP) family. In terms of processing, 4'-phosphopantetheine is transferred from CoA to a specific serine of apo-ACP by AcpS. This modification is essential for activity because fatty acids are bound in thioester linkage to the sulfhydryl of the prosthetic group.

It is found in the cytoplasm. Its pathway is lipid metabolism; fatty acid biosynthesis. In terms of biological role, carrier of the growing fatty acid chain in fatty acid biosynthesis. This Vibrio campbellii (strain ATCC BAA-1116) protein is Acyl carrier protein.